Consider the following 471-residue polypeptide: Tryptophan--tRNA ligase, cytoplasmic (471 aa).

One can recognise a WHEP-TRS domain in the interval 8-64; that stretch reads SLLELFNSIATQGELVRSLKAGNASKDEIDSAVKMLVSLKMSYKAAAGEDYKADCPP. The disordered stretch occupies residues 59-79; the sequence is KADCPPGNPAPTSNHGPDATE. N6-succinyllysine is present on Lys154. The 'HIGH' region signature appears at 164–173; it reads PSSEAMHVGH. The 'KMSKS' region signature appears at 349–353; it reads KMSAS. The residue at position 351 (Ser351) is a Phosphoserine.

This sequence belongs to the class-I aminoacyl-tRNA synthetase family. In terms of assembly, homodimer. Interacts with an oxidized form of GAPDH. GAPDH stimulates the aminoacylation activity of isoform 2. In terms of processing, proteolytic cleavage generates 2 forms; T1-TrpRS and T2-TrpRS.

It is found in the cytoplasm. The enzyme catalyses tRNA(Trp) + L-tryptophan + ATP = L-tryptophyl-tRNA(Trp) + AMP + diphosphate + H(+). Catalyzes the attachment of tryptophan to tRNA(Trp) in a two-step reaction: tryptophan is first activated by ATP to form Trp-AMP and then transferred to the acceptor end of the tRNA(Trp). Its function is as follows. Has no angiostatic activity. In terms of biological role, possesses an angiostatic activity but has no aminoacylation activity. Inhibits fluid shear stress-activated responses of endothelial cells. Regulates ERK, Akt, and eNOS activation pathways that are associated with angiogenesis, cytoskeletal reorganization and shear stress-responsive gene expression. Functionally, has an angiostatic activity. The sequence is that of Tryptophan--tRNA ligase, cytoplasmic from Homo sapiens (Human).